Reading from the N-terminus, the 307-residue chain is Ethylmalonyl-CoA decarboxylase (307 aa).

Alanine 2 is modified (N-acetylalanine). Lysine 217 carries the post-translational modification N6-acetyllysine; alternate. At lysine 217 the chain carries N6-succinyllysine; alternate. Lysine 301 is subject to N6-succinyllysine.

This sequence belongs to the enoyl-CoA hydratase/isomerase family.

The protein localises to the cytoplasm. The protein resides in the cytosol. The enzyme catalyses (2S)-ethylmalonyl-CoA + H(+) = butanoyl-CoA + CO2. The catalysed reaction is (S)-methylmalonyl-CoA + H(+) = propanoyl-CoA + CO2. It carries out the reaction (2R)-ethylmalonyl-CoA + H(+) = butanoyl-CoA + CO2. Decarboxylates ethylmalonyl-CoA, a potentially toxic metabolite, to form butyryl-CoA, suggesting it might be involved in metabolite proofreading. Acts preferentially on (S)-ethylmalonyl-CoA but also has some activity on the (R)-isomer. Also has methylmalonyl-CoA decarboxylase activity at lower level. This Homo sapiens (Human) protein is Ethylmalonyl-CoA decarboxylase (ECHDC1).